The sequence spans 528 residues: Capsule biosynthesis protein CapD proenzyme (528 aa).

The signal sequence occupies residues 1–26; that stretch reads MNSFKWGKKIILFCLIVSLMGGIGVS. Threonine 352 acts as the Nucleophile in catalysis. Residues threonine 352, 429–432, and arginine 520 contribute to the poly-gamma-D-glutamate site; that span reads GGNR.

The protein belongs to the gamma-glutamyltransferase family. As to quaternary structure, this enzyme consists of two polypeptide chains, which are synthesized in precursor form from a single polypeptide. Post-translationally, cleaved by autocatalysis into a large and a small subunit.

It functions in the pathway capsule biogenesis; capsule polysaccharide biosynthesis. Transpeptidase that cleaves the poly-gamma-D-glutamate capsule and catalyzes the formation of an amide bond with the side-chain amino group of meso-diaminopimelic acid (m-DAP) in the peptidoglycan scaffold. Degradation of the high-molecular weight capsule (H-capsule) to the lower-molecular weight capsule (L-capsule), which is released from the bacterial cell surface. The production of L-capsule is essential to mediate escape from host defenses. In Bacillus anthracis, this protein is Capsule biosynthesis protein CapD proenzyme (capD).